Here is a 261-residue protein sequence, read N- to C-terminus: tRNA pseudouridine synthase A (261 aa).

Residue aspartate 51 is the Nucleophile of the active site. A substrate-binding site is contributed by tyrosine 109.

Belongs to the tRNA pseudouridine synthase TruA family. Homodimer.

The catalysed reaction is uridine(38/39/40) in tRNA = pseudouridine(38/39/40) in tRNA. Formation of pseudouridine at positions 38, 39 and 40 in the anticodon stem and loop of transfer RNAs. This Shewanella baltica (strain OS185) protein is tRNA pseudouridine synthase A.